The sequence spans 240 residues: Arylmalonate decarboxylase (240 aa).

The catalysed reaction is 2-aryl-2-methylmalonate + H(+) = 2-arylpropionate + CO2. The chain is Arylmalonate decarboxylase from Bordetella bronchiseptica (Alcaligenes bronchisepticus).